The following is a 274-amino-acid chain: MQNITQSWFVQGMIKATTDAWLKGWDERNGGNLTLRLDDADIAPYHDNFHAQPRYIPLSQPMPLLANTPFIVTGSGKFFRNVQLDPAANLGVVKVDSDGAGYHILWGLTHEAVPTSELPAHFLSHCERIKATNGKDRVIMHCHATNLIALTYVLENDTAVFTRQLWEGSTECLVVFPDGVGILPWMVPGTDEIGQATAQEMQKHSLVLWPFHGVFGSGPTLDETFGLIDTAEKSAQVLVKVYSMGGMKQTISREELIALGQRFGVTPLASALAL.

Residue Glu-117 is part of the active site. Zn(2+) contacts are provided by His-141, His-143, and His-212.

Belongs to the aldolase class II family. RhaD subfamily. In terms of assembly, homotetramer. Zn(2+) serves as cofactor.

It is found in the cytoplasm. The enzyme catalyses L-rhamnulose 1-phosphate = (S)-lactaldehyde + dihydroxyacetone phosphate. The protein operates within carbohydrate degradation; L-rhamnose degradation; glycerone phosphate from L-rhamnose: step 3/3. Functionally, catalyzes the reversible cleavage of L-rhamnulose-1-phosphate to dihydroxyacetone phosphate (DHAP) and L-lactaldehyde. This Escherichia coli O17:K52:H18 (strain UMN026 / ExPEC) protein is Rhamnulose-1-phosphate aldolase.